Consider the following 750-residue polypeptide: Photosystem I P700 chlorophyll a apoprotein A1 (750 aa).

Helical transmembrane passes span 70–93 (VFSA…FHGA), 156–179 (LYCT…FHYH), 195–219 (LNHH…HVSL), 291–309 (IAHH…GHMY), 346–369 (WHAQ…HHMY), 385–411 (LSLF…IFMV), 433–455 (AIIS…LYIH), and 531–549 (FLVH…LILL). Positions 573 and 582 each coordinate [4Fe-4S] cluster. A run of 2 helical transmembrane segments spans residues 589–610 (HVFL…HFSW) and 664–686 (LSAY…MFLF). A chlorophyll a'-binding site is contributed by H675. Residues M683 and Y691 each contribute to the chlorophyll a site. W692 is a binding site for phylloquinone. The helical transmembrane segment at 724-744 (AVGVTHYLLGGIATTWAFFLA) threads the bilayer.

This sequence belongs to the PsaA/PsaB family. In terms of assembly, the PsaA/B heterodimer binds the P700 chlorophyll special pair and subsequent electron acceptors. PSI consists of a core antenna complex that captures photons, and an electron transfer chain that converts photonic excitation into a charge separation. The eukaryotic PSI reaction center is composed of at least 11 subunits. The cofactor is P700 is a chlorophyll a/chlorophyll a' dimer, A0 is one or more chlorophyll a, A1 is one or both phylloquinones and FX is a shared 4Fe-4S iron-sulfur center..

It is found in the plastid. The protein resides in the chloroplast thylakoid membrane. It carries out the reaction reduced [plastocyanin] + hnu + oxidized [2Fe-2S]-[ferredoxin] = oxidized [plastocyanin] + reduced [2Fe-2S]-[ferredoxin]. PsaA and PsaB bind P700, the primary electron donor of photosystem I (PSI), as well as the electron acceptors A0, A1 and FX. PSI is a plastocyanin-ferredoxin oxidoreductase, converting photonic excitation into a charge separation, which transfers an electron from the donor P700 chlorophyll pair to the spectroscopically characterized acceptors A0, A1, FX, FA and FB in turn. Oxidized P700 is reduced on the lumenal side of the thylakoid membrane by plastocyanin. In Nymphaea alba (White water-lily), this protein is Photosystem I P700 chlorophyll a apoprotein A1.